Here is a 123-residue protein sequence, read N- to C-terminus: uncharacterized protein (123 aa).

This is an uncharacterized protein from Shigella boydii serotype 4 (strain Sb227).